Reading from the N-terminus, the 232-residue chain is Ribosomal RNA small subunit methyltransferase G (232 aa).

Positions 1–24 are disordered; that stretch reads MVDTALHPIPGRRTPPHPRSTLPL. S-adenosyl-L-methionine-binding positions include G91, L96, 142 to 143, and R160; that span reads AE.

The protein belongs to the methyltransferase superfamily. RNA methyltransferase RsmG family.

The protein resides in the cytoplasm. In terms of biological role, specifically methylates the N7 position of guanine in position 518 of 16S rRNA. The chain is Ribosomal RNA small subunit methyltransferase G from Corynebacterium efficiens (strain DSM 44549 / YS-314 / AJ 12310 / JCM 11189 / NBRC 100395).